Consider the following 354-residue polypeptide: Divinyl chlorophyll a/b light-harvesting protein PcbG (354 aa).

The next 6 helical transmembrane spans lie at 27 to 47 (FIAA…ASTL), 65 to 85 (IFLA…VWTG), 88 to 108 (VASV…GALS), 201 to 221 (VLGG…FHIA), 241 to 261 (AVLS…AFWC), and 308 to 328 (LTNV…WHAI).

This sequence belongs to the PsbB/PsbC family. IsiA/Pcb subfamily. As to quaternary structure, the antenna complex consists of divinyl chlorophylls (a and b) and divinyl chlorophyll a/b binding proteins and binds more divinyl chlorophyll b than does the antenna complex from high-light-adapted Prochlorococcus. Requires divinyl chlorophyll a as cofactor. The cofactor is divinyl chlorophyll b.

The protein localises to the cellular thylakoid membrane. Functionally, the antenna complex functions as a light receptor, it captures and delivers excitation energy to photosystems II and I. The Prochlorales pcb genes are not related to higher plant LHCs. The protein is Divinyl chlorophyll a/b light-harvesting protein PcbG (pcbG) of Prochlorococcus marinus (strain NATL2A).